A 179-amino-acid polypeptide reads, in one-letter code: MVRDKMGKKITGLLDGDRVIVFDKNGISKLSARHYGNVEGNFLSLSLVEALYLINLGWLEVKYKDNKPLSFEELYEYARNVEERLCLKYLVYKDLRTRGYIVKTGLKYGADFRLYERGANIDKEHSVYLVKVFPEDSSFLLSELTGFVRVAHSVRKKLLIAIVDADGDIVYYNMTYVKP.

Active-site residues include Y115, H125, and K156.

It belongs to the tRNA-intron endonuclease family. Archaeal short subfamily. In terms of assembly, homotetramer; although the tetramer contains four active sites, only two participate in the cleavage. Therefore, it should be considered as a dimer of dimers.

It catalyses the reaction pretRNA = a 3'-half-tRNA molecule with a 5'-OH end + a 5'-half-tRNA molecule with a 2',3'-cyclic phosphate end + an intron with a 2',3'-cyclic phosphate and a 5'-hydroxyl terminus.. Its function is as follows. Endonuclease that removes tRNA introns. Cleaves pre-tRNA at the 5'- and 3'-splice sites to release the intron. The products are an intron and two tRNA half-molecules bearing 2',3' cyclic phosphate and 5'-OH termini. Recognizes a pseudosymmetric substrate in which 2 bulged loops of 3 bases are separated by a stem of 4 bp. The polypeptide is tRNA-splicing endonuclease (endA) (Methanocaldococcus jannaschii (strain ATCC 43067 / DSM 2661 / JAL-1 / JCM 10045 / NBRC 100440) (Methanococcus jannaschii)).